Here is a 302-residue protein sequence, read N- to C-terminus: Phosphatidylglycerol--prolipoprotein diacylglyceryl transferase (302 aa).

The next 7 membrane-spanning stretches (helical) occupy residues Phe19 to Trp39, Leu67 to Tyr87, Ile108 to Leu128, Leu143 to Gly163, Gln203 to Tyr223, Gly232 to Val252, and Leu264 to Leu284. Position 156 (Arg156) interacts with a 1,2-diacyl-sn-glycero-3-phospho-(1'-sn-glycerol).

The protein belongs to the Lgt family.

The protein resides in the cell inner membrane. The catalysed reaction is L-cysteinyl-[prolipoprotein] + a 1,2-diacyl-sn-glycero-3-phospho-(1'-sn-glycerol) = an S-1,2-diacyl-sn-glyceryl-L-cysteinyl-[prolipoprotein] + sn-glycerol 1-phosphate + H(+). It functions in the pathway protein modification; lipoprotein biosynthesis (diacylglyceryl transfer). Functionally, catalyzes the transfer of the diacylglyceryl group from phosphatidylglycerol to the sulfhydryl group of the N-terminal cysteine of a prolipoprotein, the first step in the formation of mature lipoproteins. This is Phosphatidylglycerol--prolipoprotein diacylglyceryl transferase from Caulobacter vibrioides (strain ATCC 19089 / CIP 103742 / CB 15) (Caulobacter crescentus).